A 561-amino-acid chain; its full sequence is Arginine--tRNA ligase (561 aa).

The 'HIGH' region signature appears at 129–139 (ANPTGPLHVGH).

Belongs to the class-I aminoacyl-tRNA synthetase family. Monomer.

It localises to the cytoplasm. It catalyses the reaction tRNA(Arg) + L-arginine + ATP = L-arginyl-tRNA(Arg) + AMP + diphosphate. The sequence is that of Arginine--tRNA ligase from Bordetella parapertussis (strain 12822 / ATCC BAA-587 / NCTC 13253).